The sequence spans 1169 residues: Protein qua-1 (1169 aa).

The signal sequence occupies residues 1-22; the sequence is MRRLSAILPILLLSNFWPTVES. Disordered regions lie at residues 261 to 338 and 368 to 933; these read GATG…AGTN and AGGV…RTSS. The segment covering 278 to 292 has biased composition (low complexity); it reads ESNGNNNNSFEGGRS. Gly residues predominate over residues 312-337; that stretch reads GAGGKGGAGADGAAGSGAGAGAGAGT. Acidic residues-rich tracts occupy residues 426–437 and 453–464; these read DEEDEEDNGDED and DDGDGDEDDDGT. The span at 511 to 523 shows a compositional bias: basic and acidic residues; that stretch reads SPDDNDLLEKDEN. Gly residues-rich tracts occupy residues 526–536, 545–572, 605–634, 656–700, and 727–752; these read NGKGGAGNGNG, KGNG…GTGD, DGNG…GSGD, GSNG…GGTG, and NAEG…GAGG. The segment covering 753–774 has biased composition (basic and acidic residues); it reads KGDKSDSESGNEADGKDGKKNE. Residues 775 to 791 are compositionally biased toward gly residues; that stretch reads GAGGEAAAGSGGANKGG. Positions 793–803 are enriched in acidic residues; sequence DGDDDDVDVTD. A compositionally biased stretch (polar residues) spans 840–855; sequence GTVQTGAKHNAESSAS. Residues 889–906 show a composition bias toward low complexity; it reads SGTSESVTNGSGATESGS. A compositionally biased stretch (gly residues) spans 907-923; it reads TGSGTTGTGTSGTGSSG. Residues 924 to 933 are compositionally biased toward low complexity; it reads TGASAARTSS.

Transiently expressed in head cells.

The protein resides in the cytoplasmic vesicle. It localises to the secreted. The protein localises to the extracellular space. It is found in the extracellular matrix. Required for cuticle shedding and normal alae morphology and localization, and subsequently larval development. This is Protein qua-1 from Caenorhabditis elegans.